A 574-amino-acid polypeptide reads, in one-letter code: Ankyrin repeat protein B18 (574 aa).

ANK repeat units follow at residues 56-87 (TGYT…DVTM), 135-164 (IKSR…DPNF), 167-213 (DGYT…NLNA), 217-249 (CGNT…NFKI), 253-285 (HGLT…NVGE), and 327-356 (EGKT…DINA). Positions 541–574 (NCLLTLLPSEIIYEILYMLTINDLYNISYPPTKV) constitute an F-box domain.

The sequence is that of Ankyrin repeat protein B18 from Vaccinia virus (strain Ankara) (VACV).